The chain runs to 91 residues: N(2)-fixation sustaining protein CowN (91 aa).

It belongs to the CowN family.

Functionally, is required to sustain N(2)-dependent growth in the presence of low levels of carbon monoxide (CO). Probably acts by protecting the N(2) fixation ability of the nitrogenase complex, which is inactivated in the presence of CO. The polypeptide is N(2)-fixation sustaining protein CowN (Beijerinckia indica subsp. indica (strain ATCC 9039 / DSM 1715 / NCIMB 8712)).